The chain runs to 264 residues: Transcription initiation factor TFIID subunit 9 (264 aa).

Lys-5 carries the N6-acetyllysine modification. Phosphoserine is present on residues Ser-149, Ser-152, Ser-155, and Ser-158. Residues 150 to 174 (VGSVSSRPSTPTLGTPTPQAMSVST) are disordered. The segment covering 151–174 (GSVSSRPSTPTLGTPTPQAMSVST) has biased composition (polar residues). Phosphothreonine occurs at positions 159, 161, 164, and 178. Phosphoserine occurs at positions 181 and 196. Residues 233–264 (QNTANESANALKRKREEEDDDDDDDDDDYDNL) form a disordered region. Positions 249–264 (EEDDDDDDDDDDYDNL) are enriched in acidic residues.

This sequence belongs to the TAF9 family. Component of the TFIID basal transcription factor complex, composed of TATA-box-binding protein TBP, and a number of TBP-associated factors (TAFs), including TAF1, TAF2, TAF3, TAF4, TAF5, TAF6, TAF7, TAF8, TAF9, TAF10, TAF11, TAF12 and TAF13. Component of the TATA-binding protein-free TAF complex (TFTC), the PCAF histone acetylase complex and the STAGA transcription coactivator-HAT complex. The PCAF complex consists at least of TADA2L/ADA2, SUPT3H/SPT3, TADA3L/ADA3, TAF5L/PAF65-beta, TAF6L/PAF65-alpha, TAF10/TAFII30, TAF12/TAFII20, TAF9/TAFII31 and TRRAP. The STAGA transcription coactivator-HAT complex consists at least of SUPT3H, GCN5L2, SUPT7L, TAF5L, TAF6L, TADA3L, TAD1L, TAF10, TAF12, TRRAP and TAF9. Binds N-terminal domain of p53/TP53 which is essential for transcription. Component of some MLL1/MLL complex, at least composed of the core components KMT2A/MLL1, ASH2L, HCFC1/HCF1, WDR5 and RBBP5, as well as the facultative components BACC1, CHD8, E2F6, HSP70, INO80C, KANSL1, LAS1L, MAX, MCRS1, MGA, MYST1/MOF, PELP1, PHF20, PRP31, RING2, RUVB1/TIP49A, RUVB2/TIP49B, SENP3, TAF1, TAF4, TAF6, TAF7, TAF9 and TEX10. Binds TFIIB and the Herpes simplex virus activator VP16. Forms a heterodimer with TAF6 in a complex with the TAF4B-TAF12 heterodimer. Also interacts with TAF5. Binds directly DNA. Increased DNA binding when complexed with TAF6.

The protein localises to the nucleus. In terms of biological role, the TFIID basal transcription factor complex plays a major role in the initiation of RNA polymerase II (Pol II)-dependent transcription. TFIID recognizes and binds promoters with or without a TATA box via its subunit TBP, a TATA-box-binding protein, and promotes assembly of the pre-initiation complex (PIC). The TFIID complex consists of TBP and TBP-associated factors (TAFs), including TAF1, TAF2, TAF3, TAF4, TAF5, TAF6, TAF7, TAF8, TAF9, TAF10, TAF11, TAF12 and TAF13. TAF9 is also a component of the TBP-free TAFII complex (TFTC), the PCAF histone acetylase complex and the STAGA transcription coactivator-HAT complex. TAF9 and its paralog TAF9B are involved in transcriptional activation as well as repression of distinct but overlapping sets of genes. Essential for cell viability. May have a role in gene regulation associated with apoptosis. This is Transcription initiation factor TFIID subunit 9 from Rattus norvegicus (Rat).